Consider the following 614-residue polypeptide: UvrABC system protein C (614 aa).

A GIY-YIG domain is found at T14–I91. The UVR domain maps to D196–L231. The segment at L595–P614 is disordered. Basic and acidic residues predominate over residues A599–P614.

This sequence belongs to the UvrC family. As to quaternary structure, interacts with UvrB in an incision complex.

It localises to the cytoplasm. In terms of biological role, the UvrABC repair system catalyzes the recognition and processing of DNA lesions. UvrC both incises the 5' and 3' sides of the lesion. The N-terminal half is responsible for the 3' incision and the C-terminal half is responsible for the 5' incision. The sequence is that of UvrABC system protein C from Streptococcus pneumoniae serotype 4 (strain ATCC BAA-334 / TIGR4).